A 495-amino-acid polypeptide reads, in one-letter code: UDP-glycosyltransferase 73E1 (495 aa).

UDP-alpha-D-glucose is bound by residues serine 299, 355-356 (WA), 373-381 (HCGWNSTIE), and 395-398 (FADQ).

The protein belongs to the UDP-glycosyltransferase family.

May glycosylate diterpenes or flavonols in leaves. The sequence is that of UDP-glycosyltransferase 73E1 from Stevia rebaudiana (Stevia).